Consider the following 712-residue polypeptide: Transferrin-binding protein B (712 aa).

A signal peptide spans 1-20; it reads MNNPLVNQAAMVLPVFLLSA. Residue Cys21 is the site of N-palmitoyl cysteine attachment. Cys21 carries S-diacylglycerol cysteine lipidation. An N-terminal handle domain region spans residues 59-196; that stretch reads GGYGFAMRLK…YHGKEPSRQL (138 aa). Disordered regions lie at residues 78-104, 123-144, 223-256, 309-338, 364-398, 442-495, and 689-712; these read EDEVKLDESDWEATGLPDEPKELPKRQ, PYLKPSNHQNGNTGNGINQPKN, IIQPSKSQGDRYSGFSGDDGEEYSNKNKSTLTDG, NGKATATDKPQQNSETKEHPFVSDSSSLSG, SAKTKDKPANGNTAAASGGTDAAASNGAAGTSSEN, ASES…GDTN, and NATNASGNSSATVVFGAKRQQPVR. Over residues 95–104 the composition is skewed to basic and acidic residues; that stretch reads DEPKELPKRQ. Over residues 128–144 the composition is skewed to polar residues; that stretch reads SNHQNGNTGNGINQPKN. The tract at residues 197–367 is N-terminal beta barrel domain; the sequence is PASGKITYKG…KVAVVGSAKT (171 aa). Composition is skewed to low complexity over residues 372 to 398 and 446 to 459; these read ANGNTAAASGGTDAAASNGAAGTSSEN and GNNQANQGTNGGTA. Residues 389 to 555 form a C-terminal handle domain region; the sequence is NGAAGTSSEN…SMFLQGERTD (167 aa). A compositionally biased stretch (basic and acidic residues) spans 462–475; the sequence is RKFDHTPESDKKDA. Polar residues-rich tracts occupy residues 477-495 and 689-700; these read AGTQTNGAQTASNTAGDTN and NATNASGNSSAT. Residues 556–712 are C-terminal beta barrel domain; it reads EKEIPSEQNI…FGAKRQQPVR (157 aa).

It belongs to the TbpB family. Isotype II subfamily. In terms of assembly, binds only human holo-transferrin (TF), via the TF C-terminus. Forms a large complex with TF and TbpA. Interacts via its C-terminal domain with Slam1.

The protein localises to the cell outer membrane. Its subcellular location is the cell surface. In terms of biological role, neisseria acquires iron by extracting it from serum transferrin (TF) in its human host. Acts as a TF receptor and is required for TF utilization. Involved in the initial capture of TF. Helps select only those TF molecules that can be used as an iron source and concentrates them on the cell surface, maintaining the iron-loaded status of the TF C-terminal lobe until its delivery to TbpA. This is Transferrin-binding protein B from Neisseria meningitidis serogroup B (strain ATCC BAA-335 / MC58).